The chain runs to 80 residues: Exodeoxyribonuclease 7 small subunit (80 aa).

It belongs to the XseB family. Heterooligomer composed of large and small subunits.

The protein localises to the cytoplasm. It carries out the reaction Exonucleolytic cleavage in either 5'- to 3'- or 3'- to 5'-direction to yield nucleoside 5'-phosphates.. Its function is as follows. Bidirectionally degrades single-stranded DNA into large acid-insoluble oligonucleotides, which are then degraded further into small acid-soluble oligonucleotides. The protein is Exodeoxyribonuclease 7 small subunit of Pseudomonas fluorescens (strain Pf0-1).